Here is a 94-residue protein sequence, read N- to C-terminus: Cytochrome c-551 (94 aa).

A signal peptide spans 1–14 (MAFTAMTVAPSALA). Positions 24, 27, 28, and 73 each coordinate heme c.

In terms of processing, binds 1 heme c group covalently per subunit.

Functionally, efficiently couple electron transfer between the cytochrome bc1 complex and the photosynthetic reaction center. The protein is Cytochrome c-551 of Allochromatium vinosum (strain ATCC 17899 / DSM 180 / NBRC 103801 / NCIMB 10441 / D) (Chromatium vinosum).